Consider the following 284-residue polypeptide: Ribosomal RNA small subunit methyltransferase A (284 aa).

Residues His-12, Leu-14, Gly-47, Glu-68, Asp-93, and Asn-118 each contribute to the S-adenosyl-L-methionine site.

This sequence belongs to the class I-like SAM-binding methyltransferase superfamily. rRNA adenine N(6)-methyltransferase family. RsmA subfamily.

The protein resides in the cytoplasm. It catalyses the reaction adenosine(1518)/adenosine(1519) in 16S rRNA + 4 S-adenosyl-L-methionine = N(6)-dimethyladenosine(1518)/N(6)-dimethyladenosine(1519) in 16S rRNA + 4 S-adenosyl-L-homocysteine + 4 H(+). In terms of biological role, specifically dimethylates two adjacent adenosines (A1518 and A1519) in the loop of a conserved hairpin near the 3'-end of 16S rRNA in the 30S particle. May play a critical role in biogenesis of 30S subunits. This is Ribosomal RNA small subunit methyltransferase A from Synechocystis sp. (strain ATCC 27184 / PCC 6803 / Kazusa).